A 606-amino-acid polypeptide reads, in one-letter code: Anthranilate synthase alpha subunit 2, chloroplastic (606 aa).

The N-terminal 49 residues, 1–49, are a transit peptide targeting the chloroplast; that stretch reads MESIAAATFTPSRLAARPATPAAAAAPVRARAAVAAGGRRRTSRRGGVR.

This sequence belongs to the anthranilate synthase component I family. Heterotetramer consisting of two non-identical subunits: a beta subunit and a large alpha subunit.

It is found in the plastid. The protein resides in the chloroplast. The enzyme catalyses chorismate + L-glutamine = anthranilate + pyruvate + L-glutamate + H(+). Its pathway is amino-acid biosynthesis; L-tryptophan biosynthesis; L-tryptophan from chorismate: step 1/5. Feedback inhibition by tryptophan. In terms of biological role, part of a heterotetrameric complex that catalyzes the two-step biosynthesis of anthranilate, an intermediate in the biosynthesis of L-tryptophan. In the first step, the glutamine-binding beta subunit of anthranilate synthase (AS) provides the glutamine amidotransferase activity which generates ammonia as a substrate that, along with chorismate, is used in the second step, catalyzed by the large alpha subunit of AS to produce anthranilate. The chain is Anthranilate synthase alpha subunit 2, chloroplastic from Oryza sativa subsp. japonica (Rice).